Consider the following 452-residue polypeptide: 1-aminocyclopropane-1-carboxylate synthase 3 (452 aa).

K283 carries the N6-(pyridoxal phosphate)lysine modification.

This sequence belongs to the class-I pyridoxal-phosphate-dependent aminotransferase family. Pyridoxal 5'-phosphate serves as cofactor. As to expression, expressed in leaves. Expressed in roots and leaf blades. Expressed at low levels in leaf sheaths and shoot bases.

The catalysed reaction is S-adenosyl-L-methionine = 1-aminocyclopropane-1-carboxylate + S-methyl-5'-thioadenosine + H(+). It participates in alkene biosynthesis; ethylene biosynthesis via S-adenosyl-L-methionine; ethylene from S-adenosyl-L-methionine: step 1/2. Functionally, catalyzes the formation of 1-aminocyclopropane-1-carboxylate, a direct precursor of ethylene in higher plants. The chain is 1-aminocyclopropane-1-carboxylate synthase 3 from Oryza sativa subsp. japonica (Rice).